Consider the following 117-residue polypeptide: UPF0342 protein BLi01058/BL02870 (117 aa).

Belongs to the UPF0342 family.

In Bacillus licheniformis (strain ATCC 14580 / DSM 13 / JCM 2505 / CCUG 7422 / NBRC 12200 / NCIMB 9375 / NCTC 10341 / NRRL NRS-1264 / Gibson 46), this protein is UPF0342 protein BLi01058/BL02870.